A 598-amino-acid chain; its full sequence is Elongation factor 4 (598 aa).

The tr-type G domain occupies 2 to 184; the sequence is NNIRNFAIIA…AIVTKLPAPQ (183 aa). GTP contacts are provided by residues 14 to 19 and 131 to 134; these read DHGKST and NKVD.

This sequence belongs to the TRAFAC class translation factor GTPase superfamily. Classic translation factor GTPase family. LepA subfamily.

It is found in the cell membrane. The enzyme catalyses GTP + H2O = GDP + phosphate + H(+). Required for accurate and efficient protein synthesis under certain stress conditions. May act as a fidelity factor of the translation reaction, by catalyzing a one-codon backward translocation of tRNAs on improperly translocated ribosomes. Back-translocation proceeds from a post-translocation (POST) complex to a pre-translocation (PRE) complex, thus giving elongation factor G a second chance to translocate the tRNAs correctly. Binds to ribosomes in a GTP-dependent manner. The sequence is that of Elongation factor 4 from Wolbachia pipientis subsp. Culex pipiens (strain wPip).